A 526-amino-acid polypeptide reads, in one-letter code: Variant surface glycoprotein MITAT 1.4A (526 aa).

The N-terminal stretch at 1-33 (MDCHTKETLGVTQWRRSTMLTLSLLYAITPADG) is a signal peptide. Disulfide bonds link Cys-47–Cys-173 and Cys-154–Cys-215. The disordered stretch occupies residues 157–193 (NEGGDGDGKDQLAPKGCRHGTEADFDAGAGPAESEVA). Asn-453 carries N-linked (GlcNAc...) asparagine glycosylation. Asp-503 carries GPI-anchor amidated aspartate lipidation. Positions 504 to 526 (SSILVTKKFALTVVSAAFVALLF) are cleaved as a propeptide — removed in mature form.

The protein resides in the cell membrane. In terms of biological role, VSG forms a coat on the surface of the parasite. The trypanosome evades the immune response of the host by expressing a series of antigenically distinct VSGs from an estimated 1000 VSG genes. The sequence is that of Variant surface glycoprotein MITAT 1.4A from Trypanosoma brucei brucei.